Consider the following 387-residue polypeptide: Fructose-1,6-bisphosphate aldolase/phosphatase (387 aa).

The Proton acceptor; for FBP phosphatase activity role is filled by Asp-13. Asp-13, His-20, Asp-54, and Asp-55 together coordinate Mg(2+). His-20 is a binding site for beta-D-fructose 1,6-bisphosphate. His-20 contacts dihydroxyacetone phosphate. Residue Tyr-92 participates in beta-D-fructose 1,6-bisphosphate binding. Gln-96 contributes to the Mg(2+) binding site. Gly-105 to Asn-106 contributes to the beta-D-fructose 1,6-bisphosphate binding site. Residue Asp-133 coordinates Mg(2+). Residue Lys-134 coordinates beta-D-fructose 1,6-bisphosphate. Lys-134 is a dihydroxyacetone phosphate binding site. The active-site Proton donor/acceptor; for FBP aldolase activity is Tyr-229. Residues Lys-232, Asp-233, and Asp-234 each coordinate Mg(2+). Lys-232 (schiff-base intermediate with DHAP; for FBP aldolase activity) is an active-site residue. Residues Gln-242–Ser-243, Arg-266, Asp-287, and Tyr-348 contribute to the beta-D-fructose 1,6-bisphosphate site. Arg-266 and Asp-287 together coordinate dihydroxyacetone phosphate.

Belongs to the FBP aldolase/phosphatase family. Homooctamer; dimer of tetramers. It depends on Mg(2+) as a cofactor.

The enzyme catalyses beta-D-fructose 1,6-bisphosphate + H2O = beta-D-fructose 6-phosphate + phosphate. The catalysed reaction is beta-D-fructose 1,6-bisphosphate = D-glyceraldehyde 3-phosphate + dihydroxyacetone phosphate. It functions in the pathway carbohydrate biosynthesis; gluconeogenesis. Catalyzes two subsequent steps in gluconeogenesis: the aldol condensation of dihydroxyacetone phosphate (DHAP) and glyceraldehyde-3-phosphate (GA3P) to fructose-1,6-bisphosphate (FBP), and the dephosphorylation of FBP to fructose-6-phosphate (F6P). In Ignicoccus hospitalis (strain KIN4/I / DSM 18386 / JCM 14125), this protein is Fructose-1,6-bisphosphate aldolase/phosphatase.